Reading from the N-terminus, the 679-residue chain is tRNA uridine 5-carboxymethylaminomethyl modification enzyme MnmG (679 aa).

15 to 20 (GAGHAG) contacts FAD. An NAD(+)-binding site is contributed by 314 to 328 (GPRYCPSIEDKIVRF).

The protein belongs to the MnmG family. As to quaternary structure, homodimer. Heterotetramer of two MnmE and two MnmG subunits. FAD is required as a cofactor.

Its subcellular location is the cytoplasm. NAD-binding protein involved in the addition of a carboxymethylaminomethyl (cmnm) group at the wobble position (U34) of certain tRNAs, forming tRNA-cmnm(5)s(2)U34. The polypeptide is tRNA uridine 5-carboxymethylaminomethyl modification enzyme MnmG (Roseiflexus sp. (strain RS-1)).